The following is a 119-amino-acid chain: Large ribosomal subunit protein uL24 (119 aa).

This sequence belongs to the universal ribosomal protein uL24 family. In terms of assembly, part of the 50S ribosomal subunit.

Its function is as follows. One of two assembly initiator proteins, it binds directly to the 5'-end of the 23S rRNA, where it nucleates assembly of the 50S subunit. Functionally, located at the polypeptide exit tunnel on the outside of the subunit. This Methanococcus vannielii protein is Large ribosomal subunit protein uL24.